The chain runs to 1097 residues: Importin-5 (1097 aa).

Residue Ala-2 is modified to N-acetylalanine. 24 HEAT repeats span residues 5–38 (AAEQ…NIPG), 43–77 (TFLL…FDEV), 95–122 (MIIQ…NLID), 130–157 (PEGL…IFWN), 167–201 (QHYL…AAFI), 210–246 (LFKH…IADT), 254–289 (HLEA…LSET), 298–350 (TNIV…ACGL), 352–386 (GKLV…SAIG), 390–430 (HQQM…ATDF), 432–472 (PGFQ…FTED), 475–523 (KSLL…ADTA), 525–568 (EKFV…GLAV), 570–615 (KEKF…CKIL), 617–692 (KEFQ…AKEL), 695–737 (GFVE…ARVR), 741–780 (YLTQ…IEVM), 787–853 (NEHF…FSSY), 856–895 (KVLP…IEHC), 903–935 (AEYF…MAQY), 943–983 (FCTE…MKFK), 990–1021 (EEVL…DLIE), 1032–1067 (NTNL…VVRQ), and 1070–1093 (TSGG…IQEL). Positions 28 to 99 (QAEETYENIP…KSELLMIIQM (72 aa)) constitute an Importin N-terminal domain. A ran-GTP binding region spans residues 325–375 (DELEDDDFDSNAVAGESALDRMACGLGGKLVLPMIKEHIMQMLQNPDWKYR). Ser-827 carries the post-translational modification Phosphoserine.

This sequence belongs to the importin beta family. Importin beta-3 subfamily. Interacts with RPS7 and RPL5. Interacts with RPL23A (via BIB domain). Interacts with H2A, H2B, H3 and H4 histones. Interacts with CPEB3; this mediates CPEB3 nuclear import following neuronal stimulation which enhances the interaction in a RAN-regulated manner. Interacts with AIFM2; this interaction likely mediates the translocation of AIFM2 into the nucleus upon oxidative stress. Interacts with STX3 (isoform 3). Interacts with SRP19. In terms of assembly, (Microbial infection) Interacts with HIV-1 Rev.

It is found in the cytoplasm. The protein resides in the nucleus. The protein localises to the nucleolus. Functionally, functions in nuclear protein import as nuclear transport receptor. Serves as receptor for nuclear localization signals (NLS) in cargo substrates. Is thought to mediate docking of the importin/substrate complex to the nuclear pore complex (NPC) through binding to nucleoporin and the complex is subsequently translocated through the pore by an energy requiring, Ran-dependent mechanism. At the nucleoplasmic side of the NPC, Ran binds to the importin, the importin/substrate complex dissociates and importin is re-exported from the nucleus to the cytoplasm where GTP hydrolysis releases Ran. The directionality of nuclear import is thought to be conferred by an asymmetric distribution of the GTP- and GDP-bound forms of Ran between the cytoplasm and nucleus. Mediates the nuclear import of ribosomal proteins RPL23A, RPS7 and RPL5. In vitro, mediates nuclear import of H2A, H2B, H3 and H4 histones. Binds to CPEB3 and mediates its nuclear import following neuronal stimulation. In case of HIV-1 infection, binds and mediates the nuclear import of HIV-1 Rev. The polypeptide is Importin-5 (IPO5) (Homo sapiens (Human)).